Here is a 398-residue protein sequence, read N- to C-terminus: Phosphoglycerate kinase (398 aa).

Substrate-binding positions include aspartate 21 to asparagine 23, arginine 36, histidine 59 to arginine 62, arginine 119, and arginine 157. Residues lysine 208, glycine 296, glutamate 327, and glycine 354–serine 357 each bind ATP.

This sequence belongs to the phosphoglycerate kinase family. In terms of assembly, monomer.

The protein localises to the cytoplasm. It carries out the reaction (2R)-3-phosphoglycerate + ATP = (2R)-3-phospho-glyceroyl phosphate + ADP. Its pathway is carbohydrate degradation; glycolysis; pyruvate from D-glyceraldehyde 3-phosphate: step 2/5. This Streptococcus pyogenes serotype M1 protein is Phosphoglycerate kinase (pgk).